The primary structure comprises 34 residues: Kappa-theraphotoxin-Sc1a (34 aa).

Cystine bridges form between Cys2-Cys16, Cys9-Cys21, and Cys15-Cys28. Ile34 bears the Isoleucine amide mark.

It belongs to the neurotoxin 10 (Hwtx-1) family. 57 (ScTx1) subfamily. As to expression, expressed by the venom gland.

It is found in the secreted. Functionally, acts as a gating-modifier to inhibit voltage-gated potassium channels. It inhibits delayed Kv2.1/KCNB1 (IC(50) is 12.7 nM), Kv2.1/Kv9.3 (IC(50) is 7.2 nM) (KCNB1/KCNS3), Kv2.2/KCNB2 (IC(50) is 21.4 nM), and transient Kv4.2/KCND2 (IC(50) is 1.2 nM) channels. This is Kappa-theraphotoxin-Sc1a from Stromatopelma calceatum (Featherleg baboon tarantula).